The chain runs to 651 residues: Histone-arginine methyltransferase CARM1 (651 aa).

The segment at 28 to 139 is interaction with C9orf72; the sequence is ATVSVFPGAR…GHTLERSVFS (112 aa). One can recognise an SAM-dependent MTase PRMT-type domain in the interval 147–454; the sequence is AVQYFQFYGY…KRQSYDISIV (308 aa). S-adenosyl-L-methionine is bound by residues glutamine 160, arginine 169, glycine 193, and glutamate 215. The residue at position 217 (serine 217) is a Phosphoserine. Lysine 228 is covalently cross-linked (Glycyl lysine isopeptide (Lys-Gly) (interchain with G-Cter in ubiquitin)). 2 residues coordinate S-adenosyl-L-methionine: glutamate 244 and serine 272. The interval 347–380 is required for nuclear translocation; it reads RILMAKSVKYTVNFLEAKEGDLHRIEIPFKFHML. The interval 500–651 is transactivation domain; sequence TGSTYNLSSG…IPTNTMHYGS (152 aa). Residue arginine 551 is modified to Dimethylated arginine. The tract at residues 581–617 is disordered; it reads RSSYQWGPGRLRGHAGSSVPMTCPTGSSGAQGGGGSS.

This sequence belongs to the class I-like SAM-binding methyltransferase superfamily. Protein arginine N-methyltransferase family. In terms of assembly, homodimer. Interacts with NR1H4. Interacts with SNRPC. Interacts with the C-terminus of NCOA2/GRIP1, NCO3/ACTR and NCOA1/SRC1. Part of a complex consisting of CARM1, EP300/P300 and NCOA2/GRIP1. Interacts with FLII, TP53, myogenic factor MEF2, EP300/P300, TRIM24, CREBBP and CTNNB1. Interacts with RELA. Identified in a complex containing CARM1, TRIM24 and NCOA2/GRIP1. Interacts with NCOA3/SRC3. Interacts with SKP2. Interacts (via PH domain-like fold) with C9orf72. Interacts with PARP1; promoting PARP1 recruimtent to replication forks. Auto-methylated on Arg-551. Methylation enhances transcription coactivator activity. Methylation is required for its role in the regulation of pre-mRNA alternative splicing. In terms of processing, phosphorylation at Ser-217 interferes with S-adenosyl-L-methionine binding and strongly reduces methyltransferase activity. Phosphorylation at Ser-217 is strongly increased during mitosis, and decreases rapidly to a very low, basal level after entry into the G1 phase of the cell cycle. Phosphorylation at Ser-217 may promote location in the cytosol. Post-translationally, ubiquitinated by E3 ubiquitin-protein ligase complex containing FBXO9 at Lys-228; leading to proteasomal degradation. As to expression, isoform 1 is expressed at low levels in brain, liver and testis. In terms of tissue distribution, isoform 2 is highly expressed in brain, liver, skeletal muscle and testis. Isoform 3 is highly expressed in spleen, liver and kidney. As to expression, isoform 4 is expressed in spleen, liver and kidney.

The protein localises to the nucleus. It is found in the cytoplasm. Its subcellular location is the chromosome. It carries out the reaction L-arginyl-[protein] + 2 S-adenosyl-L-methionine = N(omega),N(omega)-dimethyl-L-arginyl-[protein] + 2 S-adenosyl-L-homocysteine + 2 H(+). Methylation of H3R17 (H3R17me) by CARM1 is stimulated by preacetylation of H3 'Lys-18' (H3K18ac) H3 'Lys-23' (H3K23ac) by EP300 and blocked by citrullination of H3 'Arg-17' (H3R17ci) by PADI4. Methylates (mono- and asymmetric dimethylation) the guanidino nitrogens of arginyl residues in several proteins involved in DNA packaging, transcription regulation, pre-mRNA splicing, and mRNA stability. Recruited to promoters upon gene activation together with histone acetyltransferases from EP300/P300 and p160 families, methylates histone H3 at 'Arg-17' (H3R17me), forming mainly asymmetric dimethylarginine (H3R17me2a), leading to activation of transcription via chromatin remodeling. During nuclear hormone receptor activation and TCF7L2/TCF4 activation, acts synergically with EP300/P300 and either one of the p160 histone acetyltransferases NCOA1/SRC1, NCOA2/GRIP1 and NCOA3/ACTR or CTNNB1/beta-catenin to activate transcription. During myogenic transcriptional activation, acts together with NCOA3/ACTR as a coactivator for MEF2C. During monocyte inflammatory stimulation, acts together with EP300/P300 as a coactivator for NF-kappa-B. Acts as a coactivator for PPARG, promotes adipocyte differentiation and the accumulation of brown fat tissue. Plays a role in the regulation of pre-mRNA alternative splicing by methylation of splicing factors. Also seems to be involved in p53/TP53 transcriptional activation. Methylates EP300/P300, both at 'Arg-2142', which may loosen its interaction with NCOA2/GRIP1, and at 'Arg-580' and 'Arg-604' in the KIX domain, which impairs its interaction with CREB and inhibits CREB-dependent transcriptional activation. Also methylates arginine residues in RNA-binding proteins PABPC1, ELAVL1 and ELAV4, which may affect their mRNA-stabilizing properties and the half-life of their target mRNAs. Acts as a transcriptional coactivator of ACACA/acetyl-CoA carboxylase by enriching H3R17 methylation at its promoter, thereby positively regulating fatty acid synthesis. Independently of its methyltransferase activity, involved in replication fork progression: promotes PARP1 recruitment to replication forks, leading to poly-ADP-ribosylation of chromatin at replication forks and reduced fork speed. Its function is as follows. Isoform 3 specifically affects pre-mRNA splicing. This activity is independent from methyltransferase activity. The chain is Histone-arginine methyltransferase CARM1 (Carm1) from Rattus norvegicus (Rat).